The primary structure comprises 427 residues: Trigger factor (427 aa).

The PPIase FKBP-type domain maps to 163-248 (GDIVVIDFAG…LKEIKRKELA (86 aa)).

It belongs to the FKBP-type PPIase family. Tig subfamily.

It is found in the cytoplasm. The catalysed reaction is [protein]-peptidylproline (omega=180) = [protein]-peptidylproline (omega=0). Involved in protein export. Acts as a chaperone by maintaining the newly synthesized protein in an open conformation. Functions as a peptidyl-prolyl cis-trans isomerase. The polypeptide is Trigger factor (Carboxydothermus hydrogenoformans (strain ATCC BAA-161 / DSM 6008 / Z-2901)).